Reading from the N-terminus, the 485-residue chain is Peroxisomal catalase (485 aa).

Residues H53 and N126 contribute to the active site. Y336 serves as a coordination point for heme.

The protein belongs to the catalase family. As to quaternary structure, homotetramer. Heme is required as a cofactor.

It localises to the peroxisome matrix. The enzyme catalyses 2 H2O2 = O2 + 2 H2O. Functionally, catalyzes the degradation of hydrogen peroxide (H(2)O(2)) generated by peroxisomal oxidases to water and oxygen, thereby protecting cells from the toxic effects of hydrogen peroxide. The chain is Peroxisomal catalase (POX9) from Candida tropicalis (Yeast).